The following is a 354-amino-acid chain: Annexin A13 (354 aa).

Annexin repeat units lie at residues 26–97 (NDPN…MLLT), 98–177 (DTDK…ALLQ), 203–275 (NLVE…LTLN), and 279–350 (NRPK…ALIG). Ca(2+) contacts are provided by Met39, Gly41, Gly43, Thr44, Glu46, Glu83, Met111, Gly113, Gly115, Glu118, Asp163, Asp265, Met292, Gly294, Leu295, Gly296, and Glu336.

This sequence belongs to the annexin family. Homodimer.

It is found in the tegument. Its subcellular location is the secreted. It localises to the extracellular exosome. The protein localises to the host cell. Functionally, involved in reproduction of the worm. Involved in host-parasite interaction. Delivered into the host cell by means of parasite exosomes. Binds to acidic phospholipid membranes in a calcium-dependent manner in vitro. Causes aggregation of liposomes in the presence of calcium, but not in its absence. Likely to promote membrane fusion. May provide structural integrity within the tegument. The sequence is that of Annexin A13 from Schistosoma japonicum (Blood fluke).